Consider the following 95-residue polypeptide: Large ribosomal subunit protein bL25 (95 aa).

This sequence belongs to the bacterial ribosomal protein bL25 family. Part of the 50S ribosomal subunit; part of the 5S rRNA/L5/L18/L25 subcomplex. Contacts the 5S rRNA. Binds to the 5S rRNA independently of L5 and L18.

This is one of the proteins that binds to the 5S RNA in the ribosome where it forms part of the central protuberance. This Tolumonas auensis (strain DSM 9187 / NBRC 110442 / TA 4) protein is Large ribosomal subunit protein bL25.